The chain runs to 276 residues: Ribosomal RNA small subunit methyltransferase A (276 aa).

Residues asparagine 24, leucine 26, glycine 51, glutamate 72, aspartate 97, and asparagine 118 each contribute to the S-adenosyl-L-methionine site.

This sequence belongs to the class I-like SAM-binding methyltransferase superfamily. rRNA adenine N(6)-methyltransferase family. RsmA subfamily.

Its subcellular location is the cytoplasm. It catalyses the reaction adenosine(1518)/adenosine(1519) in 16S rRNA + 4 S-adenosyl-L-methionine = N(6)-dimethyladenosine(1518)/N(6)-dimethyladenosine(1519) in 16S rRNA + 4 S-adenosyl-L-homocysteine + 4 H(+). In terms of biological role, specifically dimethylates two adjacent adenosines (A1518 and A1519) in the loop of a conserved hairpin near the 3'-end of 16S rRNA in the 30S particle. May play a critical role in biogenesis of 30S subunits. In Clostridium acetobutylicum (strain ATCC 824 / DSM 792 / JCM 1419 / IAM 19013 / LMG 5710 / NBRC 13948 / NRRL B-527 / VKM B-1787 / 2291 / W), this protein is Ribosomal RNA small subunit methyltransferase A.